We begin with the raw amino-acid sequence, 347 residues long: S-adenosylmethionine:tRNA ribosyltransferase-isomerase (347 aa).

The protein belongs to the QueA family. Monomer.

It localises to the cytoplasm. The enzyme catalyses 7-aminomethyl-7-carbaguanosine(34) in tRNA + S-adenosyl-L-methionine = epoxyqueuosine(34) in tRNA + adenine + L-methionine + 2 H(+). It participates in tRNA modification; tRNA-queuosine biosynthesis. Its function is as follows. Transfers and isomerizes the ribose moiety from AdoMet to the 7-aminomethyl group of 7-deazaguanine (preQ1-tRNA) to give epoxyqueuosine (oQ-tRNA). This Pseudomonas aeruginosa (strain ATCC 15692 / DSM 22644 / CIP 104116 / JCM 14847 / LMG 12228 / 1C / PRS 101 / PAO1) protein is S-adenosylmethionine:tRNA ribosyltransferase-isomerase.